Consider the following 39-residue polypeptide: Decorsin (39 aa).

Residues 27-38 (CRFPRGDADPYC) form a high affinity binding domain region. The Cell attachment site motif lies at 31 to 33 (RGD).

Belongs to the ornatin family.

It localises to the secreted. Its function is as follows. Inhibits fibrinogen interaction with platelet receptors expressed on glycoprotein IIb-IIIa complex. May prevent blood from clotting during either feeding and/or storage of ingested blood. The sequence is that of Decorsin from Macrobdella decora (North American leech).